Reading from the N-terminus, the 330-residue chain is Biotin synthase (330 aa).

The region spanning Asn-53–Ser-276 is the Radical SAM core domain. Residues Cys-68, Cys-72, and Cys-75 each coordinate [4Fe-4S] cluster. 4 residues coordinate [2Fe-2S] cluster: Cys-112, Cys-144, Cys-204, and Arg-274.

This sequence belongs to the radical SAM superfamily. Biotin synthase family. As to quaternary structure, homodimer. The cofactor is [4Fe-4S] cluster. It depends on [2Fe-2S] cluster as a cofactor.

The enzyme catalyses (4R,5S)-dethiobiotin + (sulfur carrier)-SH + 2 reduced [2Fe-2S]-[ferredoxin] + 2 S-adenosyl-L-methionine = (sulfur carrier)-H + biotin + 2 5'-deoxyadenosine + 2 L-methionine + 2 oxidized [2Fe-2S]-[ferredoxin]. The protein operates within cofactor biosynthesis; biotin biosynthesis; biotin from 7,8-diaminononanoate: step 2/2. In terms of biological role, catalyzes the conversion of dethiobiotin (DTB) to biotin by the insertion of a sulfur atom into dethiobiotin via a radical-based mechanism. The protein is Biotin synthase of Streptococcus agalactiae serotype III (strain NEM316).